The primary structure comprises 472 residues: uncharacterized protein (472 aa).

To B.subtilis YcdC.

This is an uncharacterized protein from Bacillus subtilis (strain 168).